The primary structure comprises 449 residues: Glutathione reductase (449 aa).

Serine 15, glycine 16, glutamate 35, threonine 42, cysteine 43, and lysine 51 together coordinate FAD. Serine 15 contributes to the glutathione binding site. A disulfide bond links cysteine 43 and cysteine 48. Tyrosine 99 serves as a coordination point for glutathione. Alanine 115 provides a ligand contact to FAD. Residues glycine 175, isoleucine 178, glutamate 181, arginine 198, arginine 204, and glycine 261 each coordinate NADP(+). FAD-binding residues include aspartate 302 and threonine 310. Alanine 340 contacts NADP(+). Position 435 (histidine 435) interacts with FAD. Histidine 435 (proton acceptor) is an active-site residue.

The protein belongs to the class-I pyridine nucleotide-disulfide oxidoreductase family. In terms of assembly, homodimer. The cofactor is FAD.

It is found in the cytoplasm. The enzyme catalyses 2 glutathione + NADP(+) = glutathione disulfide + NADPH + H(+). It functions in the pathway xenobiotic degradation; (2,4,5-trichlorophenoxy)acetate degradation. In terms of biological role, catalyzes the reduction of glutathione disulfide (GSSG) to reduced glutathione (GSH). Constitutes the major mechanism to maintain a high GSH:GSSG ratio in the cytosol. The protein is Glutathione reductase (gor) of Burkholderia cepacia (Pseudomonas cepacia).